Here is a 195-residue protein sequence, read N- to C-terminus: CASP-like protein 2C2 (195 aa).

Topologically, residues 1-18 (MAATTAAAAVPGVVRAER) are cytoplasmic. Residues 19–39 (LLRGGCVVMAATAALLLGFSA) traverse the membrane as a helical segment. Over 40-57 (ETKTVLFVRKTAVAKDVQ) the chain is Extracellular. Residues 58–78 (ALWVLTVAAAAAAGYQFAQLV) form a helical membrane-spanning segment. Residues 79 to 106 (RCMYCSSSGDAGAMAVAWTSFLLDKGCA) lie on the Cytoplasmic side of the membrane. The helical transmembrane segment at 107–127 (YVVFASTAAALQACMVGLIGV) threads the bilayer. Residues 128–145 (EALQWSKLCNIYTRFCEQ) are Extracellular-facing. The chain crosses the membrane as a helical span at residues 146 to 166 (AAAGMLCSFLAAAGMAVLSAF). At 167–195 (SARRLFRLYSPAGHRRSCPRAAVLATSPH) the chain is on the cytoplasmic side.

Belongs to the Casparian strip membrane proteins (CASP) family. In terms of assembly, homodimer and heterodimers.

It localises to the cell membrane. This chain is CASP-like protein 2C2, found in Oryza sativa subsp. japonica (Rice).